A 207-amino-acid polypeptide reads, in one-letter code: Small ribosomal subunit protein uS4 (207 aa).

The interval 31-55 is disordered; it reads KCKLDSKPGQHGRTSGARTSDYGTQ. Residues 42–53 are compositionally biased toward polar residues; the sequence is GRTSGARTSDYG. The region spanning 97–160 is the S4 RNA-binding domain; the sequence is SRLDNVVYRM…KKQARIIEAL (64 aa).

The protein belongs to the universal ribosomal protein uS4 family. In terms of assembly, part of the 30S ribosomal subunit. Contacts protein S5. The interaction surface between S4 and S5 is involved in control of translational fidelity.

Its function is as follows. One of the primary rRNA binding proteins, it binds directly to 16S rRNA where it nucleates assembly of the body of the 30S subunit. With S5 and S12 plays an important role in translational accuracy. This chain is Small ribosomal subunit protein uS4, found in Burkholderia multivorans (strain ATCC 17616 / 249).